A 99-amino-acid chain; its full sequence is Nucleoid-associated protein LCABL_24440 (99 aa).

It belongs to the YbaB/EbfC family. In terms of assembly, homodimer.

The protein resides in the cytoplasm. The protein localises to the nucleoid. Functionally, binds to DNA and alters its conformation. May be involved in regulation of gene expression, nucleoid organization and DNA protection. The polypeptide is Nucleoid-associated protein LCABL_24440 (Lacticaseibacillus casei (strain BL23) (Lactobacillus casei)).